We begin with the raw amino-acid sequence, 402 residues long: Sulfate adenylyltransferase (402 aa).

This sequence belongs to the sulfate adenylyltransferase family.

It catalyses the reaction sulfate + ATP + H(+) = adenosine 5'-phosphosulfate + diphosphate. It participates in sulfur metabolism; hydrogen sulfide biosynthesis; sulfite from sulfate: step 1/3. The polypeptide is Sulfate adenylyltransferase (Thiobacillus denitrificans (strain ATCC 25259 / T1)).